The following is a 198-amino-acid chain: Pyridoxal 5'-phosphate synthase subunit PdxT (198 aa).

50–52 (GES) contacts L-glutamine. Cysteine 82 functions as the Nucleophile in the catalytic mechanism. Residues arginine 111 and 140 to 141 (IR) contribute to the L-glutamine site. Active-site charge relay system residues include histidine 177 and glutamate 179.

Belongs to the glutaminase PdxT/SNO family. As to quaternary structure, in the presence of PdxS, forms a dodecamer of heterodimers. Only shows activity in the heterodimer.

The enzyme catalyses aldehydo-D-ribose 5-phosphate + D-glyceraldehyde 3-phosphate + L-glutamine = pyridoxal 5'-phosphate + L-glutamate + phosphate + 3 H2O + H(+). It catalyses the reaction L-glutamine + H2O = L-glutamate + NH4(+). It participates in cofactor biosynthesis; pyridoxal 5'-phosphate biosynthesis. In terms of biological role, catalyzes the hydrolysis of glutamine to glutamate and ammonia as part of the biosynthesis of pyridoxal 5'-phosphate. The resulting ammonia molecule is channeled to the active site of PdxS. The sequence is that of Pyridoxal 5'-phosphate synthase subunit PdxT from Leifsonia xyli subsp. xyli (strain CTCB07).